Reading from the N-terminus, the 1341-residue chain is DNA-directed RNA polymerase subunit Rpo1N (1341 aa).

Zn(2+)-binding residues include Cys62, Cys65, Cys72, His75, Cys102, Cys105, Cys149, and Cys152. Positions 918, 920, and 922 each coordinate Mg(2+).

Belongs to the RNA polymerase beta' chain family. In terms of assembly, part of the RNA polymerase complex. Mg(2+) is required as a cofactor. The cofactor is Zn(2+). In terms of processing, this protein undergoes a protein self splicing that involves a post-translational excision of the intervening region (intein) followed by peptide ligation.

The protein resides in the cytoplasm. The enzyme catalyses RNA(n) + a ribonucleoside 5'-triphosphate = RNA(n+1) + diphosphate. In terms of biological role, DNA-dependent RNA polymerase (RNAP) catalyzes the transcription of DNA into RNA using the four ribonucleoside triphosphates as substrates. Forms the clamp head domain. This is DNA-directed RNA polymerase subunit Rpo1N from Methanocaldococcus jannaschii (strain ATCC 43067 / DSM 2661 / JAL-1 / JCM 10045 / NBRC 100440) (Methanococcus jannaschii).